The primary structure comprises 294 residues: 4-hydroxy-tetrahydrodipicolinate synthase (294 aa).

Pyruvate is bound at residue Thr44. Catalysis depends on Tyr132, which acts as the Proton donor/acceptor. The active-site Schiff-base intermediate with substrate is the Lys161. Position 206 (Ile206) interacts with pyruvate.

This sequence belongs to the DapA family. As to quaternary structure, homotetramer; dimer of dimers.

It is found in the cytoplasm. It catalyses the reaction L-aspartate 4-semialdehyde + pyruvate = (2S,4S)-4-hydroxy-2,3,4,5-tetrahydrodipicolinate + H2O + H(+). Its pathway is amino-acid biosynthesis; L-lysine biosynthesis via DAP pathway; (S)-tetrahydrodipicolinate from L-aspartate: step 3/4. Catalyzes the condensation of (S)-aspartate-beta-semialdehyde [(S)-ASA] and pyruvate to 4-hydroxy-tetrahydrodipicolinate (HTPA). The sequence is that of 4-hydroxy-tetrahydrodipicolinate synthase from Thermotoga neapolitana (strain ATCC 49049 / DSM 4359 / NBRC 107923 / NS-E).